Reading from the N-terminus, the 469-residue chain is GTPase Der (469 aa).

EngA-type G domains are found at residues Pro-3–Glu-166 and Leu-177–Asn-350. GTP-binding positions include Gly-9 to Ser-16, Asp-56 to Ile-60, Asn-118 to Asp-121, Gly-183 to Ser-190, Asp-230 to Val-234, and Asn-295 to Asp-298. The region spanning Leu-351 to Glu-435 is the KH-like domain.

This sequence belongs to the TRAFAC class TrmE-Era-EngA-EngB-Septin-like GTPase superfamily. EngA (Der) GTPase family. Associates with the 50S ribosomal subunit.

GTPase that plays an essential role in the late steps of ribosome biogenesis. The chain is GTPase Der from Acinetobacter baumannii (strain SDF).